A 183-amino-acid chain; its full sequence is Potassium-transporting ATPase KdpC subunit (183 aa).

The chain crosses the membrane as a helical span at residues 10–30 (LTVFTLILFAVIYPLAIYGIA).

The protein belongs to the KdpC family. The system is composed of three essential subunits: KdpA, KdpB and KdpC.

It localises to the cell inner membrane. Part of the high-affinity ATP-driven potassium transport (or Kdp) system, which catalyzes the hydrolysis of ATP coupled with the electrogenic transport of potassium into the cytoplasm. This subunit acts as a catalytic chaperone that increases the ATP-binding affinity of the ATP-hydrolyzing subunit KdpB by the formation of a transient KdpB/KdpC/ATP ternary complex. This chain is Potassium-transporting ATPase KdpC subunit, found in Flavobacterium johnsoniae (strain ATCC 17061 / DSM 2064 / JCM 8514 / BCRC 14874 / CCUG 350202 / NBRC 14942 / NCIMB 11054 / UW101) (Cytophaga johnsonae).